Here is a 421-residue protein sequence, read N- to C-terminus: MSKTHLTEQKFSDFALHPAVIEALEKKGFHNCTPIQALALPLTLEGRDVAGQAQTGTGKTMAFLTSTFHYLLSHPAIADRQVNQPRALIMAPTRELAVQIHADAEPLAQATGLKLGLAYGGDGYDKQLKVLESGVDILIGTTGRLIDYAKQNHINLGAIQVVVLDEADRMYDLGFIKDIRWLFRRMPPATQRLNMLFSATLSYRVRELAFEQMNNAEYVEVEPEQKTGHRIKEELFYPSNEEKMRLLQTLLEEEWPDRAIIFANTKHRCEDIWGHLAADGHRVGLLTGDVAQKKRLRILDEFTRGDLDILVATDVAARGLHIPAVTHVFNYDLPDDCEDYVHRIGRTGRAGASGNSISLACEEYALNLPAIETYIGHSIPVSKYNPDALMTDLPKPLRLTRARPGNGPRRNGPPRNRRRSG.

Residues 9-37 carry the Q motif motif; that stretch reads QKFSDFALHPAVIEALEKKGFHNCTPIQA. The 180-residue stretch at 40-219 folds into the Helicase ATP-binding domain; that stretch reads LPLTLEGRDV…FEQMNNAEYV (180 aa). Residue 53-60 participates in ATP binding; it reads AQTGTGKT. A DEAD box motif is present at residues 165-168; sequence DEAD. One can recognise a Helicase C-terminal domain in the interval 245 to 390; it reads RLLQTLLEEE…VSKYNPDALM (146 aa). Positions 396 to 421 are disordered; sequence PLRLTRARPGNGPRRNGPPRNRRRSG. The segment covering 403–414 has biased composition (low complexity); sequence RPGNGPRRNGPP.

Belongs to the DEAD box helicase family. RhlB subfamily. Component of the RNA degradosome, which is a multiprotein complex involved in RNA processing and mRNA degradation.

The protein localises to the cytoplasm. The catalysed reaction is ATP + H2O = ADP + phosphate + H(+). DEAD-box RNA helicase involved in RNA degradation. Has RNA-dependent ATPase activity and unwinds double-stranded RNA. The polypeptide is ATP-dependent RNA helicase RhlB (Klebsiella pneumoniae (strain 342)).